The following is a 202-amino-acid chain: GTP cyclohydrolase 1 (202 aa).

The Zn(2+) site is built by Cys-93, His-96, and Cys-164.

Belongs to the GTP cyclohydrolase I family. In terms of assembly, toroid-shaped homodecamer, composed of two pentamers of five dimers.

The enzyme catalyses GTP + H2O = 7,8-dihydroneopterin 3'-triphosphate + formate + H(+). It participates in cofactor biosynthesis; 7,8-dihydroneopterin triphosphate biosynthesis; 7,8-dihydroneopterin triphosphate from GTP: step 1/1. The sequence is that of GTP cyclohydrolase 1 from Pelagibacter ubique (strain HTCC1062).